The chain runs to 482 residues: Probable cytochrome P450 508D1 (482 aa).

The helical transmembrane segment at 1-21 (MVYLKNILIFLIIFLINPLVK) threads the bilayer. Residue C428 participates in heme binding.

Belongs to the cytochrome P450 family. Heme is required as a cofactor.

It localises to the membrane. This chain is Probable cytochrome P450 508D1 (cyp508D1), found in Dictyostelium discoideum (Social amoeba).